A 232-amino-acid polypeptide reads, in one-letter code: Small ribosomal subunit protein uS3 (232 aa).

Residues 39–107 enclose the KH type-2 domain; it reads IRKFLKTKLY…DIAINIKEER (69 aa). Residues 213 to 222 are compositionally biased toward basic and acidic residues; that stretch reads QADKNEDTSP. The segment at 213–232 is disordered; the sequence is QADKNEDTSPKKPRRARRGK. The segment covering 223-232 has biased composition (basic residues); sequence KKPRRARRGK.

It belongs to the universal ribosomal protein uS3 family. As to quaternary structure, part of the 30S ribosomal subunit. Forms a tight complex with proteins S10 and S14.

Binds the lower part of the 30S subunit head. Binds mRNA in the 70S ribosome, positioning it for translation. This chain is Small ribosomal subunit protein uS3, found in Campylobacter fetus subsp. fetus (strain 82-40).